The primary structure comprises 624 residues: Chaperone protein HtpG (624 aa).

The interval 1–336 is a; substrate-binding; the sequence is MKGQETRGFQ…SNDLPLNVSR (336 aa). Residues 337–552 are b; that stretch reads EILQDSTVTR…ADEMSTQMAK (216 aa). Residues 553–624 are c; the sequence is LFAAAGQSVP…IRRMNQLLVS (72 aa).

It belongs to the heat shock protein 90 family. In terms of assembly, homodimer. In terms of processing, UMPylated on a histidine residue by YdiU under ATP-limited conditions.

It is found in the cytoplasm. With respect to regulation, UMPylation of the chaperone by YdiU negatively regulates its activity, facilitating Salmonella survival under ATP-limited conditions. Molecular chaperone. Has ATPase activity. The chain is Chaperone protein HtpG from Salmonella typhimurium (strain LT2 / SGSC1412 / ATCC 700720).